The following is a 493-amino-acid chain: Glutamyl-tRNA(Gln) amidotransferase subunit A (493 aa).

Active-site charge relay system residues include lysine 79 and serine 159. The active-site Acyl-ester intermediate is the serine 183.

It belongs to the amidase family. GatA subfamily. Heterotrimer of A, B and C subunits.

The catalysed reaction is L-glutamyl-tRNA(Gln) + L-glutamine + ATP + H2O = L-glutaminyl-tRNA(Gln) + L-glutamate + ADP + phosphate + H(+). In terms of biological role, allows the formation of correctly charged Gln-tRNA(Gln) through the transamidation of misacylated Glu-tRNA(Gln) in organisms which lack glutaminyl-tRNA synthetase. The reaction takes place in the presence of glutamine and ATP through an activated gamma-phospho-Glu-tRNA(Gln). The polypeptide is Glutamyl-tRNA(Gln) amidotransferase subunit A (Rhizobium etli (strain ATCC 51251 / DSM 11541 / JCM 21823 / NBRC 15573 / CFN 42)).